An 82-amino-acid chain; its full sequence is Cytochrome c oxidase subunit 8, mitochondrial (82 aa).

Residues 1–31 constitute a mitochondrion transit peptide; that stretch reads MFSRVALRAAPRQQPFSLVARRTFQTTRAQL. Over 32–52 the chain is Mitochondrial matrix; sequence SSPYHYPEGPRSNLPFNPKTR. The chain crosses the membrane as a helical span at residues 53 to 75; that stretch reads FFWFRYLMYCVVGFGSPVAIAVW. Residues 76–82 lie on the Mitochondrial intermembrane side of the membrane; it reads QTYRPRS.

It belongs to the cytochrome c oxidase VIIc family. In terms of assembly, component of the cytochrome c oxidase (complex IV, CIV), a multisubunit enzyme composed of 11 subunits. The complex is composed of a catalytic core of 3 subunits Cox1, Cox2 and Cox3, encoded in the mitochondrial DNA, and 8 supernumerary subunits Cox4, Cox5a/Cox5, Cox6, Cox7, Cox8, Cox7a/Cox9, Cox6b/Cox12 and Cox6a/Cox13, which are encoded in the nuclear genome. The complex exists as a monomer or a dimer and forms respiratory supercomplexes (SCs) in the inner mitochondrial membrane with NADH-ubiquinone oxidoreductase (complex I, CI) and ubiquinol-cytochrome c oxidoreductase (cytochrome b-c1 complex, complex III, CIII), resulting in various different assemblies (supercomplexes I(1)IV(1), I(1)III(3)IV(2), III(2)IV(1) and III(2)IV(2) as well as larger supercomplexes of compositions like I(1)III(2)IV(5-6)).

The protein resides in the mitochondrion inner membrane. The protein operates within energy metabolism; oxidative phosphorylation. Its function is as follows. Component of the cytochrome c oxidase, the last enzyme in the mitochondrial electron transport chain which drives oxidative phosphorylation. The respiratory chain contains 3 multisubunit complexes succinate dehydrogenase (complex II, CII), ubiquinol-cytochrome c oxidoreductase (cytochrome b-c1 complex, complex III, CIII) and cytochrome c oxidase (complex IV, CIV), that cooperate to transfer electrons derived from NADH and succinate to molecular oxygen, creating an electrochemical gradient over the inner membrane that drives transmembrane transport and the ATP synthase. Cytochrome c oxidase is the component of the respiratory chain that catalyzes the reduction of oxygen to water. Electrons originating from reduced cytochrome c in the intermembrane space (IMS) are transferred via the dinuclear copper A center (CU(A)) of Cox2 and heme A of Cox1 to the active site in Cox1, a binuclear center (BNC) formed by heme A3 and copper B (CU(B)). The BNC reduces molecular oxygen to 2 water molecules using 4 electrons from cytochrome c in the IMS and 4 protons from the mitochondrial matrix. The sequence is that of Cytochrome c oxidase subunit 8, mitochondrial (cox-15) from Neurospora crassa (strain ATCC 24698 / 74-OR23-1A / CBS 708.71 / DSM 1257 / FGSC 987).